Here is a 179-residue protein sequence, read N- to C-terminus: Ribosome maturation factor RimM (179 aa).

In terms of domain architecture, PRC barrel spans 95–174; that stretch reads KDEFFYFDIL…QIFCTQDAFL (80 aa).

It belongs to the RimM family. Binds ribosomal protein uS19.

It localises to the cytoplasm. An accessory protein needed during the final step in the assembly of 30S ribosomal subunit, possibly for assembly of the head region. Essential for efficient processing of 16S rRNA. May be needed both before and after RbfA during the maturation of 16S rRNA. It has affinity for free ribosomal 30S subunits but not for 70S ribosomes. In Campylobacter jejuni subsp. doylei (strain ATCC BAA-1458 / RM4099 / 269.97), this protein is Ribosome maturation factor RimM.